The sequence spans 925 residues: Proto-oncogene DBL (925 aa).

In terms of domain architecture, CRAL-TRIO spans 1-88 (MAEANPRRGK…ELGGTLQYCH (88 aa)). Residues 221–322 (WKFEQDFQQL…EIKAKRIQLS (102 aa)) form a Spectrin repeat. The region spanning 495–675 (LKNHVLNELI…LDLLKSVNDS (181 aa)) is the DH domain. One can recognise a PH domain in the interval 687–809 (NLNELGKMIM…WLKEIRNILL (123 aa)).

This sequence belongs to the MCF2 family. In terms of assembly, interacts with an array of inositol phospholipids such as phosphatidylinositol 3-phosphate (PI3P), phosphatidylinositol 4-phosphate (PI4P) and phosphatidylinositol 5-phosphate (PI5P). May interact with CCPG1. Phosphorylation by TNK2 enhances guanine nucleotide exchange factor (GEF) activity toward Rho family proteins. As to expression, isoform 1 is expressed only in brain. Isoform 3 is expressed in heart, kidney, spleen, liver and testis. Isoform 4 is expressed in brain, heart, kidney, testis, placenta, stomach and peripheral blood. The protein is detectable in brain, heart, kidney, intestine, muscle, lung and testis.

It is found in the cytoplasm. The protein resides in the membrane. Its function is as follows. Guanine nucleotide exchange factor (GEF) that modulates the Rho family of GTPases. Promotes the conversion of some member of the Rho family GTPase from the GDP-bound to the GTP-bound form. Isoform 1 exhibits no activity toward RHOA, RAC1 or CDC42. Isoform 2 exhibits decreased GEF activity toward CDC42. Isoform 3 exhibits a weak but significant activity toward RAC1 and CDC42. Isoform 4 exhibits significant activity toward RHOA and CDC42. The truncated DBL oncogene is active toward RHOA, RAC1 and CDC42. The protein is Proto-oncogene DBL (MCF2) of Homo sapiens (Human).